The following is a 425-amino-acid chain: Glutamate-1-semialdehyde 2,1-aminomutase (425 aa).

Lys264 is subject to N6-(pyridoxal phosphate)lysine.

This sequence belongs to the class-III pyridoxal-phosphate-dependent aminotransferase family. HemL subfamily. Homodimer. Pyridoxal 5'-phosphate serves as cofactor.

It localises to the cytoplasm. It carries out the reaction (S)-4-amino-5-oxopentanoate = 5-aminolevulinate. The protein operates within porphyrin-containing compound metabolism; protoporphyrin-IX biosynthesis; 5-aminolevulinate from L-glutamyl-tRNA(Glu): step 2/2. The sequence is that of Glutamate-1-semialdehyde 2,1-aminomutase from Campylobacter lari (strain RM2100 / D67 / ATCC BAA-1060).